Consider the following 114-residue polypeptide: Large ribosomal subunit protein uL22 (114 aa).

It belongs to the universal ribosomal protein uL22 family. In terms of assembly, part of the 50S ribosomal subunit.

This protein binds specifically to 23S rRNA; its binding is stimulated by other ribosomal proteins, e.g. L4, L17, and L20. It is important during the early stages of 50S assembly. It makes multiple contacts with different domains of the 23S rRNA in the assembled 50S subunit and ribosome. Functionally, the globular domain of the protein is located near the polypeptide exit tunnel on the outside of the subunit, while an extended beta-hairpin is found that lines the wall of the exit tunnel in the center of the 70S ribosome. This is Large ribosomal subunit protein uL22 from Ehrlichia canis (strain Jake).